We begin with the raw amino-acid sequence, 554 residues long: Protein SINE2 (554 aa).

The interval 17 to 290 is ARMADILLO-type fold; that stretch reads DKDPDSHKTA…MAAHETMRQA (274 aa). 3 disordered regions span residues 306-332, 411-442, and 465-487; these read CKPR…VYSR, NESV…KHHR, and ETSS…TTED. The span at 311–321 shows a compositional bias: low complexity; sequence SLSGSVKSTSS. Basic and acidic residues predominate over residues 322–332; that stretch reads LREHDGSVYSR. Residues 419 to 431 show a composition bias toward basic residues; the sequence is NRSRSSRRNTKKR. The span at 465 to 485 shows a compositional bias: low complexity; that stretch reads ETSSSSSIYDTSGTTTPTNTT. The region spanning 509 to 554 is the KASH domain; sequence LDPRLGRSKGVLKLGLSVFSIAVAGFASFMWMYLQDDMMPPHLVPT. A helical membrane pass occupies residues 522 to 542; the sequence is LGLSVFSIAVAGFASFMWMYL. The Required for nuclear localization motif lies at 551–554; that stretch reads LVPT.

Interacts with SUN1 and SUN2. Expressed in epidermal cells, mesophyll cells, trichomes and root cells.

Its subcellular location is the nucleus membrane. Functionally, plays a role in innate immunity against the oomycete pathogen A.arabidopsidis (Hpa). The sequence is that of Protein SINE2 from Arabidopsis thaliana (Mouse-ear cress).